A 54-amino-acid chain; its full sequence is Potassium channel toxin alpha-KTx 14.5 (54 aa).

Residues 1–23 (MKIFFAILLILAVCSMAIWTVNG) form the signal peptide. Intrachain disulfides connect Cys30/Cys46, Cys36/Cys51, and Cys40/Cys53.

Belongs to the short scorpion toxin superfamily. Potassium channel inhibitor family. Alpha-KTx 14 subfamily. Expressed by the venom gland.

Its subcellular location is the secreted. Functionally, inhibits potassium channels. May be active towards small conductance calcium-activated potassium channels (KCNN, SK), and less active towards voltage-gated potassium channels (Kv/KCN). The sequence is that of Potassium channel toxin alpha-KTx 14.5 from Mesobuthus gibbosus (Mediterranean checkered scorpion).